We begin with the raw amino-acid sequence, 96 residues long: Protein RnfH (96 aa).

This sequence belongs to the UPF0125 (RnfH) family.

The protein is Protein RnfH of Salmonella agona (strain SL483).